Consider the following 602-residue polypeptide: Elongation factor 4 (602 aa).

Residues 7–188 (ENIRNFSIIA…SIIRLVPPPK (182 aa)) enclose the tr-type G domain. GTP-binding positions include 19 to 24 (DHGKST) and 135 to 138 (NKID).

Belongs to the TRAFAC class translation factor GTPase superfamily. Classic translation factor GTPase family. LepA subfamily.

The protein resides in the cell inner membrane. It catalyses the reaction GTP + H2O = GDP + phosphate + H(+). In terms of biological role, required for accurate and efficient protein synthesis under certain stress conditions. May act as a fidelity factor of the translation reaction, by catalyzing a one-codon backward translocation of tRNAs on improperly translocated ribosomes. Back-translocation proceeds from a post-translocation (POST) complex to a pre-translocation (PRE) complex, thus giving elongation factor G a second chance to translocate the tRNAs correctly. Binds to ribosomes in a GTP-dependent manner. In Chlamydia trachomatis serovar L2 (strain ATCC VR-902B / DSM 19102 / 434/Bu), this protein is Elongation factor 4.